Here is a 200-residue protein sequence, read N- to C-terminus: NADH-quinone oxidoreductase subunit B (200 aa).

4 residues coordinate [4Fe-4S] cluster: Cys-79, Cys-80, Cys-144, and Cys-174.

This sequence belongs to the complex I 20 kDa subunit family. In terms of assembly, NDH-1 is composed of 14 different subunits. Subunits NuoB, C, D, E, F, and G constitute the peripheral sector of the complex. [4Fe-4S] cluster serves as cofactor.

It localises to the cell inner membrane. It carries out the reaction a quinone + NADH + 5 H(+)(in) = a quinol + NAD(+) + 4 H(+)(out). In terms of biological role, NDH-1 shuttles electrons from NADH, via FMN and iron-sulfur (Fe-S) centers, to quinones in the respiratory chain. The immediate electron acceptor for the enzyme in this species is believed to be ubiquinone. Couples the redox reaction to proton translocation (for every two electrons transferred, four hydrogen ions are translocated across the cytoplasmic membrane), and thus conserves the redox energy in a proton gradient. In Caulobacter vibrioides (strain NA1000 / CB15N) (Caulobacter crescentus), this protein is NADH-quinone oxidoreductase subunit B.